Consider the following 242-residue polypeptide: Small ribosomal subunit protein uS2 (242 aa).

This sequence belongs to the universal ribosomal protein uS2 family.

The sequence is that of Small ribosomal subunit protein uS2 from Shewanella amazonensis (strain ATCC BAA-1098 / SB2B).